The chain runs to 458 residues: tRNA modification GTPase MnmE (458 aa).

(6S)-5-formyl-5,6,7,8-tetrahydrofolate-binding residues include Arg26, Glu88, and Arg127. One can recognise a TrmE-type G domain in the interval 224–378; that stretch reads GLSTAIIGRP…IEDRINQLFF (155 aa). Asn234 serves as a coordination point for K(+). GTP-binding positions include 234–239, 253–259, and 278–281; these read NVGKSS, TDIAGTT, and DTAG. A Mg(2+)-binding site is contributed by Ser238. K(+)-binding residues include Thr253, Ile255, and Thr258. Thr259 serves as a coordination point for Mg(2+). Lys458 lines the (6S)-5-formyl-5,6,7,8-tetrahydrofolate pocket.

Belongs to the TRAFAC class TrmE-Era-EngA-EngB-Septin-like GTPase superfamily. TrmE GTPase family. Homodimer. Heterotetramer of two MnmE and two MnmG subunits. It depends on K(+) as a cofactor.

It is found in the cytoplasm. Functionally, exhibits a very high intrinsic GTPase hydrolysis rate. Involved in the addition of a carboxymethylaminomethyl (cmnm) group at the wobble position (U34) of certain tRNAs, forming tRNA-cmnm(5)s(2)U34. The sequence is that of tRNA modification GTPase MnmE from Streptococcus pyogenes serotype M3 (strain ATCC BAA-595 / MGAS315).